The primary structure comprises 547 residues: CAP-Gly domain-containing linker protein 3 (547 aa).

The interval 1–49 (MTKTDPAPMAPPPRGEEEEEEEEDEPVPEAPSPTQERRQKPVVHPSAPA) is disordered. The span at 16 to 27 (EEEEEEEEDEPV) shows a compositional bias: acidic residues. ANK repeat units follow at residues 117 to 158 (TDMT…LRSR), 160 to 191 (TNMN…VVNS), and 197 to 229 (NHGS…LRNR). The 43-residue stretch at 314 to 356 (GTTEFASGQWVGVELDEPEGKNDGSVGGVRYFICPPKQGLFAS) folds into the CAP-Gly 1 domain. Positions 365–413 (DAPPSSVTSTPRTPRMDFSRVTGKGRREHKGKKKTPSSPSLGSLQQRDG) are disordered. The segment covering 367–377 (PPSSVTSTPRT) has biased composition (low complexity). Phosphothreonine is present on Thr374. The span at 387–399 (GKGRREHKGKKKT) shows a compositional bias: basic residues. Residues 400–410 (PSSPSLGSLQQ) show a composition bias toward polar residues. Residue Ser401 is modified to Phosphoserine. A CAP-Gly 2 domain is found at 436 to 478 (GKTDFAPGYWYGIELDQPTGKHDGSVFGVRYFTCPPRHGVFAP). Residues 488–547 (STDSPGDSVGAKKVHQVTMTQPKRTFTTVRTPKDIASENSISRLLFCCWFPWMLRAEMQS) form a goLD region. 2 S-palmitoyl cysteine lipidation sites follow: Cys534 and Cys535.

As to quaternary structure, homodimer. Interacts with AKT1 and AKT2; when AKT1 and AKT2 are phosphorylated and activated, affinity is higher for AKT2. Interacts with ZDHHC13 (via ANK repeats). Interacts with ZDHHC17 (via ANK repeats). Palmitoylation by ZDHHC17 regulates association with the plasma membrane.

The protein resides in the cell membrane. It localises to the cytoplasm. The protein localises to the golgi apparatus. It is found in the golgi stack. Functionally, functions as a cytoplasmic linker protein. Involved in TGN-endosome dynamics. May modulate the cellular compartmentalization of AKT kinase family and promote its cell membrane localization, thereby playing a role in glucose transport in adipocytes. This is CAP-Gly domain-containing linker protein 3 (CLIP3) from Homo sapiens (Human).